The sequence spans 395 residues: S-adenosylmethionine synthase (395 aa).

Residue His-18 participates in ATP binding. Asp-20 is a Mg(2+) binding site. Glu-46 serves as a coordination point for K(+). Positions 59 and 103 each coordinate L-methionine. A flexible loop region spans residues 103–113 (QSADIAVGVDS). Residues 170 to 172 (DAK), Asp-244, 250 to 251 (RK), Ala-267, and Lys-271 contribute to the ATP site. Position 244 (Asp-244) interacts with L-methionine. An L-methionine-binding site is contributed by Lys-275.

The protein belongs to the AdoMet synthase family. In terms of assembly, homotetramer; dimer of dimers. It depends on Mg(2+) as a cofactor. Requires K(+) as cofactor.

The protein resides in the cytoplasm. The catalysed reaction is L-methionine + ATP + H2O = S-adenosyl-L-methionine + phosphate + diphosphate. Its pathway is amino-acid biosynthesis; S-adenosyl-L-methionine biosynthesis; S-adenosyl-L-methionine from L-methionine: step 1/1. Functionally, catalyzes the formation of S-adenosylmethionine (AdoMet) from methionine and ATP. The overall synthetic reaction is composed of two sequential steps, AdoMet formation and the subsequent tripolyphosphate hydrolysis which occurs prior to release of AdoMet from the enzyme. The chain is S-adenosylmethionine synthase from Gluconacetobacter diazotrophicus (strain ATCC 49037 / DSM 5601 / CCUG 37298 / CIP 103539 / LMG 7603 / PAl5).